A 658-amino-acid chain; its full sequence is Squalene--hopene cyclase (658 aa).

The PFTB 1 repeat unit spans residues 69-110 (EAKIGRYLRRIQGEHGGWSLFYGGDLDLSATVKAYFALKMIG). Asp-392 acts as the Proton donor in catalysis. 3 PFTB repeats span residues 418–459 (KARA…GALL), 486–526 (MKAA…NVAA), and 534–584 (IQKA…GLMA).

The protein belongs to the terpene cyclase/mutase family.

It is found in the cell membrane. It carries out the reaction squalene = hop-22(29)-ene. It catalyses the reaction squalene + H2O = hopan-22-ol. It participates in secondary metabolite biosynthesis; hopanoid biosynthesis. Catalyzes the cyclization of squalene into hopene. This is Squalene--hopene cyclase (shc) from Zymomonas mobilis subsp. mobilis (strain ATCC 31821 / ZM4 / CP4).